The following is a 246-amino-acid chain: uncharacterized protein (246 aa).

Composition is skewed to basic residues over residues 1–10 (MVWRFQKHIG) and 79–97 (TRRRGAGQRHCNQKPKAGR). Residues 1 to 184 (MVWRFQKHIG…LPPAHVPPTL (184 aa)) form a disordered region. Pro residues predominate over residues 158-180 (PPFPPPPPPGDPTPPSPLPPAHV).

This is an uncharacterized protein from Homo sapiens (Human).